The following is a 1053-amino-acid chain: Focal adhesion kinase 1 (1053 aa).

Residues 1–27 (MAAAYLDPNLNHTPSSSAKTHLGTGME) form a disordered region. Residues 10 to 19 (LNHTPSSSAK) show a composition bias toward polar residues. One can recognise an FERM domain in the interval 35–355 (RVLKVFHYFE…GYCRLVNGAT (321 aa)). At tyrosine 397 the chain carries Phosphotyrosine; by autocatalysis. Tyrosine 407 is subject to Phosphotyrosine. A Protein kinase domain is found at 422 to 680 (IELGRCIGEG…ELKAQLSTIL (259 aa)). ATP contacts are provided by residues 428–434 (IGEGQFG), lysine 454, and 500–502 (ELC). Aspartate 546 functions as the Proton acceptor in the catalytic mechanism. Phosphotyrosine; by SRC occurs at positions 576 and 577. A compositionally biased stretch (basic and acidic residues) spans 686 to 697 (QQEERMRMESRR). 2 disordered regions span residues 686 to 741 (QQEE…QPNH) and 843 to 892 (RGSI…LASL). Tyrosine 863 carries the phosphotyrosine modification. A Phosphoserine modification is found at serine 911. Tyrosine 926 carries the phosphotyrosine modification.

The protein belongs to the protein kinase superfamily. Tyr protein kinase family. FAK subfamily. In terms of assembly, interacts with ARHGAP26, GRB7, DCC, PIK3R1, PXN and SRC. Interacts with the ARP2/3 complex. Post-translationally, phosphorylated on tyrosine residues upon activation, e.g. upon integrin signaling. Tyr-397 is the major autophosphorylation site, but other kinases can also phosphorylate this residue. Phosphorylation at Tyr-397 promotes interaction with SRC and SRC family members, leading to phosphorylation at Tyr-576, Tyr-577 and at additional tyrosine residues. Isoform 2 is phosphorylated on serine or threonine residues, but apparently not on tyrosine residues.

The protein localises to the cell junction. It localises to the focal adhesion. Its subcellular location is the cell membrane. The protein resides in the cytoplasm. It is found in the perinuclear region. The protein localises to the cell cortex. It localises to the cytoskeleton. Its subcellular location is the microtubule organizing center. The protein resides in the centrosome. It is found in the nucleus. The protein localises to the cilium basal body. The catalysed reaction is L-tyrosyl-[protein] + ATP = O-phospho-L-tyrosyl-[protein] + ADP + H(+). Subject to autoinhibition, mediated by interactions between the FERM domain and the kinase domain. Activated by autophosphorylation at Tyr-397. This promotes interaction with SRC and phosphorylation at Tyr-576 and Tyr-577 in the kinase activation loop. Phosphorylation at Tyr-576 and Tyr-577 is required for maximal kinase activity. Inhibited by TAE226. Functionally, non-receptor protein-tyrosine kinase that plays an essential role in regulating cell migration, adhesion, spreading, reorganization of the actin cytoskeleton, formation and disassembly of focal adhesions and cell protrusions, cell cycle progression, cell proliferation and apoptosis. Required for early embryonic development, embryonic angiogenesis, normal cardiomyocyte migration and proliferation, and normal heart development. Regulates axon growth and neuronal cell migration, axon branching and synapse formation; required for normal development of the nervous system. Plays a role in osteogenesis and differentiation of osteoblasts. Functions in integrin signal transduction, but also in signaling downstream of numerous growth factor receptors, G-protein coupled receptors (GPCR), ephrin receptors, netrin receptors and LDL receptors. Forms multisubunit signaling complexes with SRC and SRC family members upon activation; this leads to the phosphorylation of additional tyrosine residues, creating binding sites for scaffold proteins, effectors and substrates. Regulates numerous signaling pathways. Promotes activation of phosphatidylinositol 3-kinase and the AKT1 signaling cascade. Promotes activation of MAPK1/ERK2, MAPK3/ERK1 and the MAP kinase signaling cascade. Promotes localized and transient activation of guanine nucleotide exchange factors (GEFs) and GTPase-activating proteins (GAPs), and thereby modulates the activity of Rho family GTPases. Signaling via CAS family members mediates activation of RAC1. Regulates P53/TP53 activity and stability. Phosphorylates SRC; this increases SRC kinase activity. Isoform 2 (FRNK) does not contain a kinase domain and inhibits PTK2/FAK1 phosphorylation and signaling. The protein is Focal adhesion kinase 1 (PTK2) of Gallus gallus (Chicken).